A 397-amino-acid chain; its full sequence is Acetate kinase (397 aa).

Asparagine 8 contacts Mg(2+). Lysine 15 provides a ligand contact to ATP. Arginine 90 serves as a coordination point for substrate. Residue aspartate 147 is the Proton donor/acceptor of the active site. ATP-binding positions include 207 to 211, 283 to 285, and 330 to 334; these read HLGAG, DMR, and GVGEN. Glutamate 383 is a Mg(2+) binding site.

The protein belongs to the acetokinase family. As to quaternary structure, homodimer. Mg(2+) is required as a cofactor. Requires Mn(2+) as cofactor.

The protein resides in the cytoplasm. It catalyses the reaction acetate + ATP = acetyl phosphate + ADP. It functions in the pathway metabolic intermediate biosynthesis; acetyl-CoA biosynthesis; acetyl-CoA from acetate: step 1/2. In terms of biological role, catalyzes the formation of acetyl phosphate from acetate and ATP. Can also catalyze the reverse reaction. The protein is Acetate kinase of Fructilactobacillus sanfranciscensis (Lactobacillus sanfranciscensis).